A 100-amino-acid chain; its full sequence is Sec-independent protein translocase protein TatA (100 aa).

A helical transmembrane segment spans residues 1–21 (MGALRPWHIAVLVVVLILLFG). Residues 46 to 58 (LHDDDRDLAEKAD) show a composition bias toward basic and acidic residues. The segment at 46–100 (LHDDDRDLAEKADAQAGYQPMPPQVQQGQHPQQSPYPAPPQQQPVVDPVQRTRDS) is disordered. Residues 69–78 (QVQQGQHPQQ) are compositionally biased toward low complexity.

Belongs to the TatA/E family. As to quaternary structure, the Tat system comprises two distinct complexes: a TatABC complex, containing multiple copies of TatA, TatB and TatC subunits, and a separate TatA complex, containing only TatA subunits. Substrates initially bind to the TatABC complex, which probably triggers association of the separate TatA complex to form the active translocon.

It is found in the cell membrane. Part of the twin-arginine translocation (Tat) system that transports large folded proteins containing a characteristic twin-arginine motif in their signal peptide across membranes. TatA could form the protein-conducting channel of the Tat system. The chain is Sec-independent protein translocase protein TatA from Salinispora tropica (strain ATCC BAA-916 / DSM 44818 / JCM 13857 / NBRC 105044 / CNB-440).